We begin with the raw amino-acid sequence, 408 residues long: Snake venom 5'-nucleotidase (408 aa).

Zn(2+) is bound by residues histidine 54 and histidine 77. 2 N-linked (GlcNAc...) asparagine glycosylation sites follow: asparagine 167 and asparagine 181. 2 cysteine pairs are disulfide-bonded: cysteine 187-cysteine 192 and cysteine 199-cysteine 221. Residue arginine 188 participates in AMP binding. The AMP site is built by asparagine 224, arginine 229, and phenylalanine 252. The cysteines at positions 311 and 314 are disulfide-linked. Residues phenylalanine 335 and aspartate 341 each contribute to the AMP site. 2 propeptides (removed in mature form) span residues 385-388 and 385-408; these read DGTL and DGTL…FFIL.

It belongs to the 5'-nucleotidase family. Homodimer. Post-translationally, venom 5'-nucleotidases (or a part thereof) may be released into the venom via exosome-like vesicles. They may be attached via a GPI anchor to the membrane of these vesicles. Soluble forms of 5'-nucleotidase might be released by cleavage of the ectodomain in the exosome-like vesicles or venom gland cells. As to expression, expressed by the venom gland.

The protein localises to the membrane. The catalysed reaction is a ribonucleoside 5'-phosphate + H2O = a ribonucleoside + phosphate. It carries out the reaction AMP + H2O = adenosine + phosphate. The enzyme catalyses GMP + H2O = guanosine + phosphate. It catalyses the reaction ADP + H2O = AMP + phosphate + H(+). Is potently inhibited by metal ions Fe(3+), Cu(2+) and Zn(2+). Is enhanced by Mn(2+). Ca(2+) and Mg(2+) have no effect. In terms of biological role, hydrolyzes nucleotides into nucleosides. Prefers AMP as the substrate but also cleaves GMP and ADP. Does not affect AMP, cAMP and cGMP. Inhibits ADP- and collagen-induced platelet aggregation. Snake venom 5'-nucleotidases are widely distributed among venomous snake taxa, but there is a lack of information about their biological activities. They have been shown to inhibit platelet aggregation. This effect may be due to the liberation of inhibitory AMP or adenosine by its action on ADP released upon initiation of aggregation. Venom 5'-nucleotidases are also known to synergistically act in vivo with other toxins like ADPases, phospholipases, and disintegrins to exert a more pronounced anti-coagulant effect. The protein is Snake venom 5'-nucleotidase of Macrovipera lebetinus (Levantine viper).